The following is an 88-amino-acid chain: Elongation factor 1-beta (88 aa).

Belongs to the EF-1-beta/EF-1-delta family.

Functionally, promotes the exchange of GDP for GTP in EF-1-alpha/GDP, thus allowing the regeneration of EF-1-alpha/GTP that could then be used to form the ternary complex EF-1-alpha/GTP/AAtRNA. This Natronomonas pharaonis (strain ATCC 35678 / DSM 2160 / CIP 103997 / JCM 8858 / NBRC 14720 / NCIMB 2260 / Gabara) (Halobacterium pharaonis) protein is Elongation factor 1-beta.